The chain runs to 207 residues: Guanylate kinase (207 aa).

One can recognise a Guanylate kinase-like domain in the interval 5-184; sequence GNLFIVSAPS…ALADLSAIIR (180 aa). ATP is bound at residue 12 to 19; the sequence is APSGAGKS. The tract at residues 30–49 is disordered; the sequence is PSDKQVSVSHTTRKPRPGEV.

Belongs to the guanylate kinase family.

Its subcellular location is the cytoplasm. It carries out the reaction GMP + ATP = GDP + ADP. In terms of biological role, essential for recycling GMP and indirectly, cGMP. This is Guanylate kinase from Shewanella frigidimarina (strain NCIMB 400).